A 46-amino-acid chain; its full sequence is uncharacterized protein (46 aa).

This is an uncharacterized protein from Haemophilus influenzae (strain ATCC 51907 / DSM 11121 / KW20 / Rd).